Here is a 533-residue protein sequence, read N- to C-terminus: Neuropilin and tolloid-like protein 1 (533 aa).

The first 22 residues, 1–22 (MIYGRSLFHIIASLIILHSSGA), serve as a signal peptide directing secretion. Residues 23–344 (TKKGTEKQIT…LDQLTNTSGT (322 aa)) are Extracellular-facing. Intrachain disulfides connect cysteine 41–cysteine 68, cysteine 96–cysteine 118, cysteine 172–cysteine 202, cysteine 229–cysteine 251, cysteine 292–cysteine 304, cysteine 299–cysteine 317, and cysteine 311–cysteine 326. CUB domains lie at 41–155 (CGTW…YNFT) and 172–287 (CEFE…FTSF). One can recognise an LDL-receptor class A domain in the interval 291–327 (PCEGNTFFCHSNMCINNTLVCNGLQNCVYPWDENHCK). Residue asparagine 306 is glycosylated (N-linked (GlcNAc...) asparagine). Asparagine 340 is a glycosylation site (N-linked (GlcNAc...) asparagine). Residues 345 to 365 (VIGVTSCIVIILIIVSVIVQI) traverse the membrane as a helical segment. At 366–533 (KQPRKKYVQR…HESEYNTTRV (168 aa)) the chain is on the cytoplasmic side. Phosphotyrosine is present on tyrosine 417. Residues 531–533 (TRV) carry the PDZ-binding motif.

In terms of assembly, interacts with PLZ domains of DLG2, DLG3 and DLG4 via its C-terminal TRV domain. Interacts with GRIN2A and GRIN2B via its CUB domains. In terms of tissue distribution, expressed only in brain. Present throughout the central nervous system. Highly expressed in the hippocampal CA3 region, olfactory bulb and tubercle, caudate putamen, and neocortex in the adult brain.

The protein resides in the membrane. The protein localises to the postsynaptic density membrane. Functionally, involved in the development and/or maintenance of neuronal circuitry. Accessory subunit of the neuronal N-methyl-D-aspartate receptor (NMDAR) critical for maintaining the abundance of GRIN2A-containing NMDARs in the postsynaptic density. Regulates long-term NMDA receptor-dependent synaptic plasticity and cognition, at least in the context of spatial learning and memory. The polypeptide is Neuropilin and tolloid-like protein 1 (Neto1) (Mus musculus (Mouse)).